Consider the following 593-residue polypeptide: Thiol:disulfide interchange protein DsbD (593 aa).

The signal sequence occupies residues 1–21; the sequence is MRALLTFFVAGLLVLSSPAMA. 2 disulfides stabilise this stretch: Cys130/Cys136 and Cys207/Cys328. 8 helical membrane passes run 193–215, 235–257, 269–291, 318–340, 347–369, 384–401, 408–425, and 440–462; these read LLFL…YPIL, LVYV…SAGL, LIGL…TLQL, GAIS…LLYV, LTGG…LVAV, RVKT…IFLL, MWST…FGWL, and SAVG…NYWF. A Thioredoxin domain is found at 451 to 593; the sequence is FASAQPALNY…FLEHIQRISN (143 aa). Cys508 and Cys511 form a disulfide bridge.

This sequence belongs to the thioredoxin family. DsbD subfamily.

It is found in the cell inner membrane. It catalyses the reaction [protein]-dithiol + NAD(+) = [protein]-disulfide + NADH + H(+). It carries out the reaction [protein]-dithiol + NADP(+) = [protein]-disulfide + NADPH + H(+). Required to facilitate the formation of correct disulfide bonds in some periplasmic proteins and for the assembly of the periplasmic c-type cytochromes. Acts by transferring electrons from cytoplasmic thioredoxin to the periplasm. This transfer involves a cascade of disulfide bond formation and reduction steps. The polypeptide is Thiol:disulfide interchange protein DsbD (Vibrio vulnificus (strain CMCP6)).